The sequence spans 317 residues: Acetyl-coenzyme A carboxylase carboxyl transferase subunit alpha (317 aa).

The 254-residue stretch at L40–S293 folds into the CoA carboxyltransferase C-terminal domain.

The protein belongs to the AccA family. In terms of assembly, acetyl-CoA carboxylase is a heterohexamer composed of biotin carboxyl carrier protein (AccB), biotin carboxylase (AccC) and two subunits each of ACCase subunit alpha (AccA) and ACCase subunit beta (AccD).

Its subcellular location is the cytoplasm. It catalyses the reaction N(6)-carboxybiotinyl-L-lysyl-[protein] + acetyl-CoA = N(6)-biotinyl-L-lysyl-[protein] + malonyl-CoA. The protein operates within lipid metabolism; malonyl-CoA biosynthesis; malonyl-CoA from acetyl-CoA: step 1/1. In terms of biological role, component of the acetyl coenzyme A carboxylase (ACC) complex. First, biotin carboxylase catalyzes the carboxylation of biotin on its carrier protein (BCCP) and then the CO(2) group is transferred by the carboxyltransferase to acetyl-CoA to form malonyl-CoA. The sequence is that of Acetyl-coenzyme A carboxylase carboxyl transferase subunit alpha from Brucella melitensis biotype 2 (strain ATCC 23457).